We begin with the raw amino-acid sequence, 382 residues long: LIM homeobox transcription factor 1-alpha (382 aa).

2 consecutive LIM zinc-binding domains span residues Ser33–Val92 and Val92–Leu154. Disordered stretches follow at residues Ala161–Arg208 and Lys252–Ile286. The segment at residues Pro195–Ala254 is a DNA-binding region (homeobox). Over residues Arg256 to Arg269 the composition is skewed to low complexity.

The protein resides in the nucleus. Its function is as follows. Acts as a transcriptional activator by binding to an A/T-rich sequence, the FLAT element, in the insulin gene promoter. Required for development of the roof plate and, in turn, for specification of dorsal cell fates in the CNS and developing vertebrae. This chain is LIM homeobox transcription factor 1-alpha (Lmx1a), found in Mus musculus (Mouse).